The following is a 537-amino-acid chain: 5,6-dihydroxyindole-2-carboxylic acid oxidase (537 aa).

The first 24 residues, 1 to 24, serve as a signal peptide directing secretion; sequence MSAPKLLSLGCIFFPLLLFQQARA. Residues 25–477 are Lumenal, melanosome-facing; the sequence is QFPRQCATVE…WPSREFSVPE (453 aa). Cystine bridges form between Cys-30–Cys-41, Cys-42–Cys-65, Cys-56–Cys-99, Cys-101–Cys-110, and Cys-113–Cys-122. N-linked (GlcNAc...) asparagine glycans are attached at residues Asn-96 and Asn-104. N-linked (GlcNAc...) asparagine glycosylation occurs at Asn-181. Zn(2+) is bound by residues His-192, His-215, and His-224. 2 cysteine pairs are disulfide-bonded: Cys-258-Cys-261 and Cys-290-Cys-303. Asn-304 and Asn-350 each carry an N-linked (GlcNAc...) asparagine glycan. Residues His-377 and His-381 each contribute to the Zn(2+) site. Residue Asn-385 is glycosylated (N-linked (GlcNAc...) asparagine). His-404 contacts Zn(2+). Residues 478–501 traverse the membrane as a helical segment; sequence IIAIAVVGALLLVALIFGTASYLI. Topologically, residues 502–537 are cytoplasmic; that stretch reads RARRSMDEANQPLLTDQYQCYAEEYEKLQNPNQSVV.

The protein belongs to the tyrosinase family. In terms of assembly, monomer. Interacts with ATP7A. Interacts with SLC45A2. Cu(2+) serves as cofactor. It depends on Zn(2+) as a cofactor. Post-translationally, glycosylated. In terms of tissue distribution, pigment cells.

Its subcellular location is the melanosome membrane. It catalyses the reaction 2 5,6-dihydroxyindole-2-carboxylate + O2 = 2 indole-5,6-quinone-2-carboxylate + 2 H2O. It functions in the pathway pigment biosynthesis; melanin biosynthesis. Its activity is regulated as follows. The activity depends critically on the nature of the bound metal ion. Catalyzes the oxidation of 5,6-dihydroxyindole-2-carboxylic acid (DHICA) in the presence of bound Cu(2+) ions, but lacks activity in the presence of bound Zn(2+) ions. Plays a role in melanin biosynthesis. Catalyzes the oxidation of 5,6-dihydroxyindole-2-carboxylic acid (DHICA) into indole-5,6-quinone-2-carboxylic acid in the presence of bound Cu(2+) ions, but not in the presence of Zn(2+). May regulate or influence the type of melanin synthesized. Also to a lower extent, capable of hydroxylating tyrosine and producing melanin. In Homo sapiens (Human), this protein is 5,6-dihydroxyindole-2-carboxylic acid oxidase.